Reading from the N-terminus, the 1163-residue chain is MLEGRILAVSTQTKAVAGIPGAPKRVSFAKIREPLEVPGLLDLQTESFAWLIGSPEWRERAAARGDVGLVGGLEEVLEELSPIEDFSGSMSLSFSDPRFEEVKASIDECKEKDMTYAAPLFVTAEFINNNTGEIKSQTVFMGDFPMMTDKGTFIINGTERVVVSQLVRSPGVYFDHSIDKGTEKDLHSVRVIPSRGAWLEFDVDKRDTVGVRIDRKRRQPVTVLLKALGWTTEEIAERFGFSEIMMSTLEKDNTAGQDEALLDIYRKLRPGEPPTKESAQTLLENLFFKEKRYDLARVGRYKINKKLGIHVGEPVTGSVLTKEDIVTTIEYLVRLHAGDKTMTAPGGVEVPVEVDDIDHFGNRRLRTVGELIQNQIRVGLSRMERVVRERMTTQDVEAITPQTLINIRPVVAAIKEFFGTSQLSQFMDQNNPLSGLTHKRRLSALGPGGLSRERAGLEVRDVHPSHYGRMCPIETPEGPNIGLIGSLSVYARVNPFGFIETPYRKVVDGRVTDEVVYLTADEEDRHVRAQANSPVGPDGRFLEDRVLCRRGNEEMEYVAATEVDFMDVSPRQMVSVATAMIPFLEHDDANRALMGANMQRQAVPLIRSEAPIVGTGMELRAAVDAGDVVVNEKAGVVEEVSADYVTVMADDGTRKSYRMRKFNRSNQGTCSNQRPIVDEGQRVEAGQVLADGPCTENGEMALGKNLLVAIMPWEGHNYEDAIILSQRLVEQDVLTSIHIEEHEIDARDTKLGAEEITRDIPNVSDEVLADLDERGIVRIGAEVRDGDILVGKVTPKGETELTPEERLLRAIFGEKAREVRDTSLKVPHGESGKVIGIRVFSREDDDDLPPGVNELVRVYVAQKRKIQDGDKLAGRHGNKGVIGKILPTEDMPFLPDGTPVDIILNTHGVPRRMNIGQILETHLGWIGKAGWKVEGNPEWAKDLPEEMWEAPADSNIATPVFDGAREEELTGLLGSTLPNRDGERMVDDNGKAVLFDGRSGEPFPYPVAVGYMYILKLHHLVDDKIHARSTGPYSMITQQPLGGKAQFGGQRFGEMECWAMQAYGAAYTLQELLTIKSDDVVGRVKVYEAIVKGENIPEPGIPESFKVLLKELQSLCLNVEVLSSDGAAIELREGEDEDLERAAANLGINLSRNEAATVDDLAN.

Belongs to the RNA polymerase beta chain family. The RNAP catalytic core consists of 2 alpha, 1 beta, 1 beta' and 1 omega subunit. When a sigma factor is associated with the core the holoenzyme is formed, which can initiate transcription.

The enzyme catalyses RNA(n) + a ribonucleoside 5'-triphosphate = RNA(n+1) + diphosphate. DNA-dependent RNA polymerase catalyzes the transcription of DNA into RNA using the four ribonucleoside triphosphates as substrates. This chain is DNA-directed RNA polymerase subunit beta 2, found in Nocardia farcinica (strain IFM 10152).